The following is an 84-amino-acid chain: Sulfur carrier protein TusA (84 aa).

Cys-21 functions as the Cysteine persulfide intermediate in the catalytic mechanism.

This sequence belongs to the sulfur carrier protein TusA family.

It localises to the cytoplasm. Sulfur carrier protein which probably makes part of a sulfur-relay system. The chain is Sulfur carrier protein TusA from Pseudomonas syringae pv. tomato (strain ATCC BAA-871 / DC3000).